The primary structure comprises 172 residues: Small ribosomal subunit protein uS5 (172 aa).

One can recognise an S5 DRBM domain in the interval 17-80 (LREKMIAVNR…EEARRNMVKV (64 aa)).

This sequence belongs to the universal ribosomal protein uS5 family. In terms of assembly, part of the 30S ribosomal subunit. Contacts proteins S4 and S8.

Functionally, with S4 and S12 plays an important role in translational accuracy. Located at the back of the 30S subunit body where it stabilizes the conformation of the head with respect to the body. This chain is Small ribosomal subunit protein uS5, found in Verminephrobacter eiseniae (strain EF01-2).